Reading from the N-terminus, the 515-residue chain is Forkhead box protein H1 (515 aa).

Residues 55 to 103 (YREGGTWSPDRGSMHGLSPGTQEGSCTQAEGTKDSLGGDETLSRKSKKK) are disordered. Positions 73–84 (PGTQEGSCTQAE) are enriched in polar residues. Positions 110-206 (KPPYSYLAMI…MKLQNTALTR (97 aa)) form a DNA-binding region, fork-head. The interval 307 to 399 (YPQSKPTRNG…EPPKKMPLLS (93 aa)) is disordered. Residues 322-339 (SASHSTYSSSSSSISTIS) are compositionally biased toward low complexity. Over residues 375-388 (STPSSDTDAGNYSP) the composition is skewed to polar residues. The tract at residues 377–503 (PSSDTDAGNY…PSFLGQCLGS (127 aa)) is SMAD-interaction domain (SID). The Fast/FoxH1 motif 1 (FM1) motif lies at 402-406 (LPTSY). The Fast/FoxH1 motif 2 (FM2) signature appears at 412–418 (PNVVAPP). The SMAD-interaction motif (SIM) signature appears at 467–488 (LDNMLKTVPPNKSVFDVLTSHP).

In terms of assembly, ARF1 contains 2 smad2s, 1 smad4 and 1 foxh1/fast-1 protein. Interaction with smad4 is most likely indirect through interaction with the MH2 domain of smad2. Binds to the MH2 domain of smad3, which can incorporate into the ARF1 complex. The ARF1 and ARF2 complexes are activated by distinct TGF-beta family members; formation of ARF1 is promoted by activin. Interacts (via Fork-head domain) with gtf2ird1/wbscr11 (via repeats 4-5).

The protein resides in the nucleus. Transcriptional activator. Recognizes and binds to the DNA sequence 5'-TGT[GT][GT]ATT-3'. Upon TGF-beta induction, forms a transcriptionally active complex with smad2 and smad4 called activin-responsive factor 1 (ARF1), which binds a site on the mix-B/mix.2 promoter called the activin response element (ARE). Binds to activated smads and the ARE with much lower affinity than fast3. Necessary for the first steps in mesoderm specification, directly inducing mesodermal genes. Acts with fast3 to control the convergent extension movements of gastrulation. Binds to the proximal element (PE) of the gsc gene and cooperates with gtf2ird1/wbscr11 and SMAD proteins to regulate gsc transcription. This chain is Forkhead box protein H1, found in Xenopus tropicalis (Western clawed frog).